Consider the following 577-residue polypeptide: Cell adhesion molecule CEACAM20 (577 aa).

Residues 1-30 form the signal peptide; sequence MELAGFHCCSWTVILLSALLPTTWRPPAAA. The Extracellular segment spans residues 31 to 430; that stretch reads HFIHRADLLS…LQSSSMSPGA (400 aa). 4 Ig-like C2-type domains span residues 48-137, 142-223, 239-324, and 329-415; these read PLAK…ASLT, PDPV…TNLS, PNIE…LKLT, and PDQV…ASVL. Cys72 and Cys120 are disulfide-bonded. Asn78 and Asn102 each carry an N-linked (GlcNAc...) asparagine glycan. 2 cysteine pairs are disulfide-bonded: Cys259/Cys307 and Cys358/Cys399. The N-linked (GlcNAc...) asparagine glycan is linked to Asn289. The chain crosses the membrane as a helical span at residues 431 to 451; it reads IAGIVIGILVAIALAIGLGYF. At 452–577 the chain is on the cytoplasmic side; the sequence is LYSTKDRWTR…SLYCKITPSA (126 aa). A disordered region spans residues 461–568; sequence RRRSASDTTS…YEKLLNSNHS (108 aa). Polar residues predominate over residues 474–484; the sequence is IPPTSVMQSTP. Basic and acidic residues predominate over residues 516–526; that stretch reads DSPEQFYEKKP. The segment covering 536–551 has biased composition (pro residues); it reads KPLPQIPKQPLMPPGP. 2 positions are modified to phosphotyrosine: Tyr559 and Tyr570.

It belongs to the immunoglobulin superfamily. CEA family. In terms of assembly, interacts (via extracellular domain) with PTPRH (via extracellular domain); the interaction dephosphorylates CEACAM20. Interacts (phosphorylated form) with SYK (via SH2 domains); the interaction further enhances CEACAM20 phosphorylation. In terms of processing, phosphorylated on tyrosine residues by SYK, SRC and FYN in vitro. In terms of tissue distribution, strongly expressed in the small intestine and colon (at protein level). Minimal expression in other tissues (at protein level). Highly expressed in cecum, colon, ileum, jejunum, and testis, and also detected at lower levels in salivary gland and thymus.

It is found in the cell projection. The protein resides in the microvillus membrane. The protein localises to the apical cell membrane. Its function is as follows. Together with the tyrosine-protein kinase SYK, enhances production of the cytokine CXCL8/IL-8 via the NFKB pathway and may thus have a role in the intestinal immune response. The protein is Cell adhesion molecule CEACAM20 of Mus musculus (Mouse).